Here is a 193-residue protein sequence, read N- to C-terminus: ATP-dependent Clp protease proteolytic subunit 1 (193 aa).

S99 (nucleophile) is an active-site residue. H124 is a catalytic residue.

This sequence belongs to the peptidase S14 family. Fourteen ClpP subunits assemble into 2 heptameric rings which stack back to back to give a disk-like structure with a central cavity, resembling the structure of eukaryotic proteasomes.

The protein localises to the cytoplasm. The enzyme catalyses Hydrolysis of proteins to small peptides in the presence of ATP and magnesium. alpha-casein is the usual test substrate. In the absence of ATP, only oligopeptides shorter than five residues are hydrolyzed (such as succinyl-Leu-Tyr-|-NHMec, and Leu-Tyr-Leu-|-Tyr-Trp, in which cleavage of the -Tyr-|-Leu- and -Tyr-|-Trp bonds also occurs).. Functionally, cleaves peptides in various proteins in a process that requires ATP hydrolysis. Has a chymotrypsin-like activity. Plays a major role in the degradation of misfolded proteins. This is ATP-dependent Clp protease proteolytic subunit 1 from Shouchella clausii (strain KSM-K16) (Alkalihalobacillus clausii).